The chain runs to 234 residues: Protein-toxin resistance protein KTD1 (234 aa).

Residues 1–47 (MQTPSENTDVKMDTLDEPSAHLIEENVALPEDTFSSHLSYVLYEIAH) are Cytoplasmic-facing. Residues 48 to 68 (CKPIMFMIIIIVSLISLIVLF) traverse the membrane as a helical segment. The required for resistance to killer toxin K28, a protein-toxin encoded by the M28 virus stretch occupies residues 68–75 (FHDNDGCT). Over 69–76 (HDNDGCTV) the chain is Extracellular. Residues 77-97 (ILVMSLIVASMALMVVAAFTF) form a helical membrane-spanning segment. The Cytoplasmic portion of the chain corresponds to 98-234 (GKAITEQEFM…RKQYPDADLP (137 aa)). The tract at residues 147 to 234 (FYSGKKCHEF…RKQYPDADLP (88 aa)) is required for resistance to killer toxin K28, a protein-toxin encoded by the M28 virus. Residues 168–187 (SHSDSSSNSAEDTQSPVSAG) are disordered. The span at 177–187 (AEDTQSPVSAG) shows a compositional bias: polar residues. Lys217 participates in a covalent cross-link: Glycyl lysine isopeptide (Lys-Gly) (interchain with G-Cter in ubiquitin).

Belongs to the DUP/COS family.

It localises to the vacuole membrane. Its subcellular location is the golgi apparatus. The protein resides in the trans-Golgi network membrane. It is found in the endosome membrane. Functionally, confers resistance to killer toxin K28, a protein-toxin encoded by the M28 virus that uses S.cerevisiae as a host. Probably acts against K28 after endocytosis of the protein-toxin. This Saccharomyces cerevisiae (strain ATCC 204508 / S288c) (Baker's yeast) protein is Protein-toxin resistance protein KTD1.